Consider the following 337-residue polypeptide: Junctional sarcoplasmic reticulum protein 1 (337 aa).

Residues 1–84 (MATRAMEELD…EKEPVSKVTS (84 aa)) are mediates interaction with CACNA1S. Disordered regions lie at residues 23 to 125 (SALA…ELPW) and 159 to 337 (EAPA…KGRD). Basic and acidic residues-rich tracts occupy residues 49 to 59 (SRSHDSQERVT) and 69 to 79 (TKPKKMEKEPV). Positions 165–180 (PESWASSSSSPKGPAS) are enriched in low complexity. The segment covering 199 to 213 (SKLEERVQIPRSEEA) has biased composition (basic and acidic residues). Positions 214–225 (AEKDEWESEEAA) are enriched in acidic residues. 3 stretches are compositionally biased toward basic and acidic residues: residues 236–277 (GPKE…RGAR), 285–309 (RRWE…DRKR), and 316–325 (RRPDEEDRPL). Basic residues predominate over residues 326–337 (GRQKRRAGKGRD).

Interacts with CACNA1S, CACNB1 and calsequestrin.

It is found in the sarcoplasmic reticulum membrane. The protein localises to the endoplasmic reticulum membrane. Functionally, involved in skeletal muscle excitation/contraction coupling (EC), probably acting as a regulator of the voltage-sensitive calcium channel CACNA1S. EC is a physiological process whereby an electrical signal (depolarization of the plasma membrane) is converted into a chemical signal, a calcium gradient, by the opening of ryanodine receptor calcium release channels. May regulate CACNA1S membrane targeting and activity. This chain is Junctional sarcoplasmic reticulum protein 1 (JSRP1), found in Bos taurus (Bovine).